Consider the following 175-residue polypeptide: Large ribosomal subunit protein uL18 (175 aa).

It belongs to the universal ribosomal protein uL18 family. In terms of assembly, part of the 50S ribosomal subunit. Contacts the 5S and 23S rRNAs.

Its function is as follows. This is one of the proteins that bind and probably mediate the attachment of the 5S RNA into the large ribosomal subunit, where it forms part of the central protuberance. The sequence is that of Large ribosomal subunit protein uL18 from Methanospirillum hungatei JF-1 (strain ATCC 27890 / DSM 864 / NBRC 100397 / JF-1).